Consider the following 330-residue polypeptide: DNA-directed RNA polymerase subunit alpha (330 aa).

The interval 1 to 231 (MQTNLLKPKT…EQLAVFAQLE (231 aa)) is alpha N-terminal domain (alpha-NTD). The alpha C-terminal domain (alpha-CTD) stretch occupies residues 250 to 330 (FDPILLRPVD…SWPPAGLDKR (81 aa)).

This sequence belongs to the RNA polymerase alpha chain family. In terms of assembly, homodimer. The RNAP catalytic core consists of 2 alpha, 1 beta, 1 beta' and 1 omega subunit. When a sigma factor is associated with the core the holoenzyme is formed, which can initiate transcription.

It carries out the reaction RNA(n) + a ribonucleoside 5'-triphosphate = RNA(n+1) + diphosphate. In terms of biological role, DNA-dependent RNA polymerase catalyzes the transcription of DNA into RNA using the four ribonucleoside triphosphates as substrates. This chain is DNA-directed RNA polymerase subunit alpha, found in Polaromonas naphthalenivorans (strain CJ2).